The sequence spans 828 residues: Periplasmic nitrate reductase (828 aa).

Residues 1-31 (MKLSRRSFMKANAVAAAAAAAGLSVPGVARA) constitute a signal peptide (tat-type signal). A 4Fe-4S Mo/W bis-MGD-type domain is found at 39–95 (IKWDKAPCRFCGTGCGVLVGTQQGRVVACQGDPDAPVNRGLNCIKGYFLPKIMYGKD). C46, C49, C53, and C81 together coordinate [4Fe-4S] cluster. Residues K83, Q150, N175, C179, 212–219 (WGSNMAEM), 243–247 (STFQH), 262–264 (QSD), M372, Q376, N482, 508–509 (SD), K531, D558, and 718–727 (TGRVLEHWHT) each bind Mo-bis(molybdopterin guanine dinucleotide). F794 serves as a coordination point for substrate. Mo-bis(molybdopterin guanine dinucleotide) contacts are provided by N802 and K819.

It belongs to the prokaryotic molybdopterin-containing oxidoreductase family. NasA/NapA/NarB subfamily. In terms of assembly, component of the periplasmic nitrate reductase NapAB complex composed of NapA and NapB. [4Fe-4S] cluster serves as cofactor. It depends on Mo-bis(molybdopterin guanine dinucleotide) as a cofactor. Post-translationally, predicted to be exported by the Tat system. The position of the signal peptide cleavage has not been experimentally proven.

Its subcellular location is the periplasm. It catalyses the reaction 2 Fe(II)-[cytochrome] + nitrate + 2 H(+) = 2 Fe(III)-[cytochrome] + nitrite + H2O. Functionally, catalytic subunit of the periplasmic nitrate reductase complex NapAB. Receives electrons from NapB and catalyzes the reduction of nitrate to nitrite. The sequence is that of Periplasmic nitrate reductase from Salmonella paratyphi C (strain RKS4594).